The following is a 337-amino-acid chain: MNTEATHDQNEALTTGARLRNAREQLGLSQQAVAERLCLKVSTVRDIEEDKAPADLASTFLRGYIRSYARLVHIPEEELLPGLEKQAPLRAAKVAPMQSFSLGKRRKKRDGWLMTFTWLVLFVVIGLSGAWWWQDHKAQQEEITTMADQSSAELSSNSEQGQSVPLNTSTTTDPATTSTPPASVDTTATNTQTPVVTAPAPAVDPQQNAVVSPSQANVDTAATPAPTAATTPDGAAPLPTDQAGVTTPVADPNALVMNFTADCWLEVTDATGKKLFSGMQRKDGNLNLTGQAPYKLKIGAPAAVQIQYQGKPVDLSRFIRTNQVARLTLNAEQSPAQ.

Residues 1-111 (MNTEATHDQN…LGKRRKKRDG (111 aa)) are Cytoplasmic-facing. Residues 19–71 (LRNAREQLGLSQQAVAERLCLKVSTVRDIEEDKAPADLASTFLRGYIRSYARL) form the HTH cro/C1-type domain. A DNA-binding region (H-T-H motif) is located at residues 30-49 (QQAVAERLCLKVSTVRDIEE). The helical; Signal-anchor for type II membrane protein transmembrane segment at 112 to 132 (WLMTFTWLVLFVVIGLSGAWW) threads the bilayer. At 133–337 (WQDHKAQQEE…TLNAEQSPAQ (205 aa)) the chain is on the periplasmic side. The span at 145–167 (TMADQSSAELSSNSEQGQSVPLN) shows a compositional bias: polar residues. Residues 145-236 (TMADQSSAEL…TAATTPDGAA (92 aa)) form a disordered region. A compositionally biased stretch (low complexity) spans 168-207 (TSTTTDPATTSTPPASVDTTATNTQTPVVTAPAPAVDPQQ). Over residues 208-218 (NAVVSPSQANV) the composition is skewed to polar residues. Low complexity predominate over residues 219-236 (DTAATPAPTAATTPDGAA).

It belongs to the RodZ family.

Its subcellular location is the cell inner membrane. Its function is as follows. Cytoskeletal protein that is involved in cell-shape control through regulation of the length of the long axis. The polypeptide is Cytoskeleton protein RodZ (Escherichia coli O157:H7).